The following is a 308-amino-acid chain: GTPase Era (308 aa).

In terms of domain architecture, Era-type G spans 14 to 181; that stretch reads RCGFVALIGA…RRALAAAMPE (168 aa). A G1 region spans residues 22–29; that stretch reads GAPNVGKS. 22 to 29 is a GTP binding site; sequence GAPNVGKS. The segment at 48 to 52 is G2; it reads QTTRA. A G3 region spans residues 69–72; that stretch reads DTPG. GTP is bound by residues 69 to 73 and 131 to 134; these read DTPGI and NKID. The interval 131–134 is G4; that stretch reads NKID. The G5 stretch occupies residues 160 to 162; sequence VAA. The KH type-2 domain occupies 212 to 289; the sequence is LHQELPYQST…HLFLFVKVRD (78 aa).

It belongs to the TRAFAC class TrmE-Era-EngA-EngB-Septin-like GTPase superfamily. Era GTPase family. As to quaternary structure, monomer.

It is found in the cytoplasm. It localises to the cell inner membrane. In terms of biological role, an essential GTPase that binds both GDP and GTP, with rapid nucleotide exchange. Plays a role in 16S rRNA processing and 30S ribosomal subunit biogenesis and possibly also in cell cycle regulation and energy metabolism. The chain is GTPase Era from Afipia carboxidovorans (strain ATCC 49405 / DSM 1227 / KCTC 32145 / OM5) (Oligotropha carboxidovorans).